Reading from the N-terminus, the 72-residue chain is Translation initiation factor IF-1 (72 aa).

The S1-like domain maps to 1–72 (MAKEELLEFP…TKGRINYRFK (72 aa)).

It belongs to the IF-1 family. As to quaternary structure, component of the 30S ribosomal translation pre-initiation complex which assembles on the 30S ribosome in the order IF-2 and IF-3, IF-1 and N-formylmethionyl-tRNA(fMet); mRNA recruitment can occur at any time during PIC assembly.

The protein localises to the cytoplasm. One of the essential components for the initiation of protein synthesis. Stabilizes the binding of IF-2 and IF-3 on the 30S subunit to which N-formylmethionyl-tRNA(fMet) subsequently binds. Helps modulate mRNA selection, yielding the 30S pre-initiation complex (PIC). Upon addition of the 50S ribosomal subunit IF-1, IF-2 and IF-3 are released leaving the mature 70S translation initiation complex. The sequence is that of Translation initiation factor IF-1 from Dinoroseobacter shibae (strain DSM 16493 / NCIMB 14021 / DFL 12).